The chain runs to 224 residues: MKIYGIYMDRPLSQEENERFMSFISPEKREKCRRFYHKEDAHRTLLGDVLVRSVISRQYQLDKSDIRFSTQEYGKPCIPDLPDAHFNISHSGRWVICAFDSQPIGIDIEKTKPISLEIAKRFFSKTEYSDLLAKDKDEQTDYFYHLWSMKESFIKQEGKGLSLPLDSFSVRLHQDGQVSIELPDSHSPCYIKTYEVDPGYKMAVCAAHPDFPEDITMVSYEELL.

Mg(2+)-binding residues include Asp-107, Glu-109, and Glu-151. Residues Gly-158 to Cys-189 form a peptidyl carrier protein binding region.

Belongs to the P-Pant transferase superfamily. Gsp/Sfp/HetI/AcpT family. Monomer in solution. It depends on Mg(2+) as a cofactor.

It catalyses the reaction apo-[ACP] + CoA = holo-[ACP] + adenosine 3',5'-bisphosphate + H(+). Functionally, activates the seven peptidyl carrier protein (PCP) domains of the first three subunits (SrfAA, SrfAB and SrfAC) of surfactin synthetase by transferring the 4'-phosphopantetheinyl moiety of coenzyme A (CoA) to a serine residue. Required for cells of B.subtilis to become producers of the lipopeptide antibiotics surfactin and plipastatin B1. This chain is 4'-phosphopantetheinyl transferase Sfp (sfp), found in Bacillus subtilis (strain 168).